We begin with the raw amino-acid sequence, 65 residues long: Large ribosomal subunit protein bL33c (65 aa).

Belongs to the bacterial ribosomal protein bL33 family.

The protein localises to the plastid. The protein resides in the chloroplast. This chain is Large ribosomal subunit protein bL33c, found in Zygnema circumcarinatum (Green alga).